The chain runs to 435 residues: Bud site selection protein RAX1 (435 aa).

The Cytoplasmic portion of the chain corresponds to 1-297 (MKEELSKVSS…PFSNHTSISR (297 aa)). The 90-residue stretch at 159-248 (VDEIMKRRSQ…LEMDCFPKFL (90 aa)) folds into the RGS domain. Ser167 is subject to Phosphoserine. A helical transmembrane segment spans residues 298 to 318 (IGFGLLWLGIGFWIGYVLIFL). Topologically, residues 319–325 (AYSRAIR) are extracellular. Residues 326–346 (VVTVVPFTLGCYCIVCGMYQV) form a helical membrane-spanning segment. Residues 347–409 (DIVYSWFGVT…FTRQLLRKRG (63 aa)) are Cytoplasmic-facing. Residues 410–430 (LWCLLLVVGATAAFTVIFSCV) form a helical membrane-spanning segment. The Extracellular portion of the chain corresponds to 431-435 (PGRRV).

As to quaternary structure, forms an heterodimeric complex with RAX2. Also interacts with BUD8 and BUD9.

The protein resides in the cell membrane. Its subcellular location is the bud neck. The protein localises to the bud tip. Required for the establishment of the bipolar budding pattern. Involved in selecting bud sites at both the distal and proximal poles of daughter cells as well as near previously used division sites on mother cells. The RAX1-RAX2 complex performs the asymmetric localization of the two cortical landmarks, BUD8 and BUD9, at the distal and proximal poles, respectively. The chain is Bud site selection protein RAX1 from Saccharomyces cerevisiae (strain ATCC 204508 / S288c) (Baker's yeast).